We begin with the raw amino-acid sequence, 341 residues long: Putative UPF0607 protein ENSP00000383783 (341 aa).

Positions 75–101 (EVRAEEPKEATEVKDQVETQGQEDNKR) are enriched in basic and acidic residues. Disordered regions lie at residues 75-115 (EVRA…TSSL) and 216-278 (GLLM…PPPA). The segment covering 234–245 (SSRSSPSRAASH) has biased composition (low complexity).

It belongs to the UPF0607 family.

The polypeptide is Putative UPF0607 protein ENSP00000383783 (Homo sapiens (Human)).